A 509-amino-acid chain; its full sequence is Histidine--tRNA ligase, cytoplasmic (509 aa).

Residue Ala2 is modified to N-acetylalanine. A WHEP-TRS domain is found at 3–59 (DRAALEELVRLQGAHVRGLKEQKASAEQIEEEVTKLLKLKAQLGQDEGKQKFVLKTP). Ser66 bears the Phosphoserine mark. L-histidine contacts are provided by residues 130–132 (DLT), Arg157, Gln173, Asp177, Arg326, and 330–331 (YY). Phosphoserine is present on Ser356.

It belongs to the class-II aminoacyl-tRNA synthetase family. Homodimer.

The protein localises to the cytoplasm. It carries out the reaction tRNA(His) + L-histidine + ATP = L-histidyl-tRNA(His) + AMP + diphosphate + H(+). Catalyzes the ATP-dependent ligation of histidine to the 3'-end of its cognate tRNA, via the formation of an aminoacyl-adenylate intermediate (His-AMP). Plays a role in axon guidance. This Mus musculus (Mouse) protein is Histidine--tRNA ligase, cytoplasmic (Hars1).